We begin with the raw amino-acid sequence, 142 residues long: Thioredoxin-like protein 4A (142 aa).

C38 and C79 form a disulfide bridge. Position 132 is a phosphoserine (S132).

This sequence belongs to the DIM1 family. In terms of assembly, component of the precatalytic spliceosome (spliceosome B complex). Component of the U5 snRNP complex. Component of the U4/U6-U5 tri-snRNP complex. The U4/U6-U5 tri-snRNP complex is a building block of the precatalytic spliceosome (spliceosome B complex). The U4/U6-U5 tri-snRNP complex is composed of the U4, U6 and U5 snRNAs and at least PRPF3, PRPF4, PRPF6, PRPF8, PRPF31, SNRNP200, TXNL4A, SNRNP40, SNRPB, SNRPD1, SNRPD2, SNRPD3, SNRPE, SNRPF, SNRPG, DDX23, CD2BP2, PPIH, SNU13, EFTUD2, SART1 and USP39, plus LSM2, LSM3, LSM4, LSM5, LSM6, LSM7 and LSM8. Directly interacts with CD2BP2. Interacts with HNRPF, HNRPH2, NEDD9 and PQBP1. Interacts with ERBB4. The disulfide bond seen in structures determined by X-ray crystallography and NMR is not essential for protein folding and function.

It localises to the nucleus. Plays a role in pre-mRNA splicing as component of the U5 snRNP and U4/U6-U5 tri-snRNP complexes that are involved in spliceosome assembly, and as component of the precatalytic spliceosome (spliceosome B complex). The polypeptide is Thioredoxin-like protein 4A (TXNL4A) (Homo sapiens (Human)).